Here is a 473-residue protein sequence, read N- to C-terminus: Photosystem II CP43 reaction center protein (473 aa).

The propeptide occupies 1-14 (MKILYSLRRFYHVE). Residue Thr-15 is modified to N-acetylthreonine. Thr-15 carries the phosphothreonine modification. The next 5 membrane-spanning stretches (helical) occupy residues 69-93 (LFEV…PHLA), 134-155 (LLGP…KDRN), 178-200 (KALY…RKIT), 255-275 (KPFA…LSYS), and 291-312 (WFNN…ASQA). [CaMn4O5] cluster is bound at residue Glu-367. A helical membrane pass occupies residues 447–471 (RARAAAAGFEKGIDRDLEPVLYMTP).

Belongs to the PsbB/PsbC family. PsbC subfamily. In terms of assembly, PSII is composed of 1 copy each of membrane proteins PsbA, PsbB, PsbC, PsbD, PsbE, PsbF, PsbH, PsbI, PsbJ, PsbK, PsbL, PsbM, PsbT, PsbX, PsbY, PsbZ, Psb30/Ycf12, at least 3 peripheral proteins of the oxygen-evolving complex and a large number of cofactors. It forms dimeric complexes. Requires Binds multiple chlorophylls and provides some of the ligands for the Ca-4Mn-5O cluster of the oxygen-evolving complex. It may also provide a ligand for a Cl- that is required for oxygen evolution. PSII binds additional chlorophylls, carotenoids and specific lipids. as cofactor.

It localises to the plastid. Its subcellular location is the chloroplast thylakoid membrane. Functionally, one of the components of the core complex of photosystem II (PSII). It binds chlorophyll and helps catalyze the primary light-induced photochemical processes of PSII. PSII is a light-driven water:plastoquinone oxidoreductase, using light energy to abstract electrons from H(2)O, generating O(2) and a proton gradient subsequently used for ATP formation. This Oryza nivara (Indian wild rice) protein is Photosystem II CP43 reaction center protein.